A 382-amino-acid polypeptide reads, in one-letter code: Galactokinase (382 aa).

34 to 37 (EHTD) serves as a coordination point for substrate. 124-130 (GAGLSSS) serves as a coordination point for ATP. Mg(2+) is bound by residues serine 130 and glutamate 162. The active-site Proton acceptor is the aspartate 174. Tyrosine 223 provides a ligand contact to substrate.

It belongs to the GHMP kinase family. GalK subfamily.

The protein resides in the cytoplasm. It carries out the reaction alpha-D-galactose + ATP = alpha-D-galactose 1-phosphate + ADP + H(+). It functions in the pathway carbohydrate metabolism; galactose metabolism. Catalyzes the transfer of the gamma-phosphate of ATP to D-galactose to form alpha-D-galactose-1-phosphate (Gal-1-P). The sequence is that of Galactokinase from Salmonella gallinarum (strain 287/91 / NCTC 13346).